A 304-amino-acid chain; its full sequence is Lipid droplet-associated triacylglycerol lipase (304 aa).

The Lumenal segment spans residues 1-155 (MTVKEYTKSK…MGIKMTAALR (155 aa)). N95 carries an N-linked (GlcNAc...) asparagine glycan. A GXSXG motif is present at residues 107–111 (GHSVG). S109 functions as the Nucleophile in the catalytic mechanism. Residues 156–176 (YIPPLAHVVSLFSYIFFYWIL) lie within the membrane without spanning it. Residues 177–304 (SEGFSRFIID…HAEYAINAFF (128 aa)) lie on the Lumenal side of the membrane.

This sequence belongs to the AB hydrolase superfamily. LDAH family.

The protein resides in the lipid droplet. The protein localises to the membrane. It catalyses the reaction a triacylglycerol + H2O = a diacylglycerol + a fatty acid + H(+). Shows both triacylglycerol (TAG) lipase and ester hydrolase activities. May play a role in TAG homeostasis. In Saccharomyces cerevisiae (strain ATCC 204508 / S288c) (Baker's yeast), this protein is Lipid droplet-associated triacylglycerol lipase.